A 120-amino-acid polypeptide reads, in one-letter code: UPF0231 protein YacL (120 aa).

The protein belongs to the UPF0231 family.

This is UPF0231 protein YacL from Salmonella typhi.